The chain runs to 263 residues: MPDARALGAAQLWIGTSWKMNKGLAESRGYARELAEYVAAKPPAGVQPFIIPSFTALTTVRDALGDDSPVLLGVQNAHWEDHGAWTGEVSVAQAKDAGAQIVEIGHSERREHFGETVETTRLKVAAALHHGLVPLLCIGESAENKQAGESSRFILEQAAGALEGLTDEHLARVLIAYEPIWAIGENGRPATVEELRQPFDDLAREYGCRTMGLLYGGSVNTDNAEDLLGIDHVTGLFIGRAAWQLPGYVRILEMAAAHPKAKA.

H106 (electrophile) is an active-site residue. E178 acts as the Proton acceptor in catalysis.

The protein belongs to the triosephosphate isomerase family.

It catalyses the reaction L-erythrulose 1-phosphate = D-erythrulose 4-phosphate. It functions in the pathway carbohydrate metabolism; L-threitol degradation. Its function is as follows. Catalyzes the isomerization of L-erythrulose-1P to D-erythrulose-4P. Involved in the degradation pathway of L-threitol, that allows M.smegmatis to grow on this compound as the sole carbon source. The chain is L-erythrulose-1-phosphate isomerase from Mycolicibacterium smegmatis (strain ATCC 700084 / mc(2)155) (Mycobacterium smegmatis).